We begin with the raw amino-acid sequence, 592 residues long: Glycosyltransferase 25 family member (592 aa).

Positions 1–13 are cleaved as a signal peptide; it reads MLALLLTTTIVSG. N-linked (GlcNAc...) asparagine glycans are attached at residues asparagine 249 and asparagine 510. Composition is skewed to basic and acidic residues over residues 552-563 and 579-592; these read RIQEPKKGDKEQ and GEHD…RSEL. A disordered region spans residues 552 to 592; sequence RIQEPKKGDKEQLPNAPALLSESGIGQGEHDLETKNRRSEL. The Prevents secretion from ER motif lies at 589-592; that stretch reads RSEL.

This sequence belongs to the glycosyltransferase 25 family.

The protein localises to the endoplasmic reticulum lumen. This Anopheles gambiae (African malaria mosquito) protein is Glycosyltransferase 25 family member.